The chain runs to 475 residues: Ribulose bisphosphate carboxylase large chain (475 aa).

Positions 1–2 (MS) are excised as a propeptide. Pro3 bears the N-acetylproline mark. The residue at position 14 (Lys14) is an N6,N6,N6-trimethyllysine. 2 residues coordinate substrate: Asn123 and Thr173. Lys175 functions as the Proton acceptor in the catalytic mechanism. Residue Lys177 coordinates substrate. Mg(2+) contacts are provided by Lys201, Asp203, and Glu204. Position 201 is an N6-carboxylysine (Lys201). The active-site Proton acceptor is His294. Substrate is bound by residues Arg295, His327, and Ser379.

The protein belongs to the RuBisCO large chain family. Type I subfamily. Heterohexadecamer of 8 large chains and 8 small chains; disulfide-linked. The disulfide link is formed within the large subunit homodimers. Mg(2+) is required as a cofactor. In terms of processing, the disulfide bond which can form in the large chain dimeric partners within the hexadecamer appears to be associated with oxidative stress and protein turnover.

It localises to the plastid. The protein resides in the chloroplast. It catalyses the reaction 2 (2R)-3-phosphoglycerate + 2 H(+) = D-ribulose 1,5-bisphosphate + CO2 + H2O. It carries out the reaction D-ribulose 1,5-bisphosphate + O2 = 2-phosphoglycolate + (2R)-3-phosphoglycerate + 2 H(+). RuBisCO catalyzes two reactions: the carboxylation of D-ribulose 1,5-bisphosphate, the primary event in carbon dioxide fixation, as well as the oxidative fragmentation of the pentose substrate in the photorespiration process. Both reactions occur simultaneously and in competition at the same active site. The chain is Ribulose bisphosphate carboxylase large chain from Larix occidentalis (Western larch).